Consider the following 127-residue polypeptide: Large ribosomal subunit protein bL20 (127 aa).

Belongs to the bacterial ribosomal protein bL20 family.

In terms of biological role, binds directly to 23S ribosomal RNA and is necessary for the in vitro assembly process of the 50S ribosomal subunit. It is not involved in the protein synthesizing functions of that subunit. In Akkermansia muciniphila (strain ATCC BAA-835 / DSM 22959 / JCM 33894 / BCRC 81048 / CCUG 64013 / CIP 107961 / Muc), this protein is Large ribosomal subunit protein bL20.